A 135-amino-acid chain; its full sequence is Ig heavy chain V region XIG14 (135 aa).

The signal sequence occupies residues 1–18 (DFIIFFIFMFFSPSCILS). Residues 20–128 (TLQESGPGTV…GYNFDYWGQG (109 aa)) form the Ig-like domain.

This chain is Ig heavy chain V region XIG14, found in Xenopus laevis (African clawed frog).